Consider the following 568-residue polypeptide: Peroxisomal leader peptide-processing protease (568 aa).

The segment at Thr332–Leu568 is serine protease. Active-site charge relay system residues include His374, Asp410, and Ser483.

It belongs to the peptidase S1B family. Homodimer. Forms a heterodimer with the C-terminal cleavage product (49 kDa form). Forms a heterodimer with the N-terminal cleavage product (10 kDa form). Interacts with PEX5. Interacts with LONP2. Post-translationally, self-cleavage gives rise to an N-terminal 10-kDa fragment and C-terminal 49-kDa fragment upon import into the peroxisomes. The full-lengh TYSND1 is the active the proteolytic processing of PTS1- and PTS2-proteins and in self-cleavage, and intermolecular self-cleavage of TYSND1 down-regulates its protease activity.

It localises to the peroxisome. Its activity is regulated as follows. Inhibited by N-ethylmaleimide (NEM). Not affected by leupeptin or trans-epoxysuccinyl-l-leucylamido-(4-gianidino) butane (E64). Functionally, peroxisomal protease that mediates both the removal of the leader peptide from proteins containing a PTS2 target sequence and processes several PTS1-containing proteins. Catalyzes the processing of PTS1-proteins involved in the peroxisomal beta-oxidation of fatty acids. The chain is Peroxisomal leader peptide-processing protease (Tysnd1) from Mus musculus (Mouse).